Reading from the N-terminus, the 237-residue chain is LexA repressor (237 aa).

Residues 1-12 are compositionally biased toward polar residues; it reads MPVKDSSSNKKN. A disordered region spans residues 1 to 20; the sequence is MPVKDSSSNKKNQIGKLSER. Positions 41–61 form a DNA-binding region, H-T-H motif; it reads IREIGDAAGLQSTSSVAYQLK. Residues 67–80 show a composition bias toward basic and acidic residues; the sequence is GYLRRDPNKPRAVD. The disordered stretch occupies residues 67–112; it reads GYLRRDPNKPRAVDVRALPDPIPSKPGRKPGPKKSSVAISPDPAET. Catalysis depends on for autocatalytic cleavage activity residues Ser-161 and Lys-198.

This sequence belongs to the peptidase S24 family. Homodimer.

The enzyme catalyses Hydrolysis of Ala-|-Gly bond in repressor LexA.. Represses a number of genes involved in the response to DNA damage (SOS response), including recA and lexA. In the presence of single-stranded DNA, RecA interacts with LexA causing an autocatalytic cleavage which disrupts the DNA-binding part of LexA, leading to derepression of the SOS regulon and eventually DNA repair. This is LexA repressor from Corynebacterium diphtheriae (strain ATCC 700971 / NCTC 13129 / Biotype gravis).